The chain runs to 102 residues: Trans-acting regulatory protein HvrA (102 aa).

A DNA-binding region spans residues 80-85 (RGRKPK).

This sequence belongs to the histone-like protein H-NS family. As to quaternary structure, homodimer that oligomerizes on DNA into higher-order complexes that form bridges between disparate regions of DNA compacting it.

The protein localises to the cytoplasm. It is found in the nucleoid. A dim-light trans-acting activator of Puf and Puh expression, that has no effect on the expression of the Puc operon. Responsible for regulating light-harvesting-I and reaction center structural gene expression differentially from that of light-harvesting-II expression in response to alterations in light. Proper light regulation of light-harvesting and reaction center polypeptide synthesis is an important physiological trait that enables cells to adapt to ever-changing environmental conditions of light intensity. This Rhodobacter capsulatus (Rhodopseudomonas capsulata) protein is Trans-acting regulatory protein HvrA (hvrA).